A 157-amino-acid polypeptide reads, in one-letter code: Transcription elongation factor GreA (157 aa).

This sequence belongs to the GreA/GreB family.

Functionally, necessary for efficient RNA polymerase transcription elongation past template-encoded arresting sites. The arresting sites in DNA have the property of trapping a certain fraction of elongating RNA polymerases that pass through, resulting in locked ternary complexes. Cleavage of the nascent transcript by cleavage factors such as GreA or GreB allows the resumption of elongation from the new 3'terminus. GreA releases sequences of 2 to 3 nucleotides. In Bartonella tribocorum (strain CIP 105476 / IBS 506), this protein is Transcription elongation factor GreA.